Reading from the N-terminus, the 1335-residue chain is Mediator of RNA polymerase II transcription subunit 15a (1335 aa).

Disordered stretches follow at residues 1 to 27 (MDNN…TQLP), 109 to 172 (GTSI…NNNT), 190 to 225 (QDSS…QQQP), 241 to 389 (FQSG…QHQQ), 401 to 448 (IQQQ…TQSN), 496 to 525 (LYSS…QQLG), 567 to 591 (SQRT…ANGG), and 683 to 815 (HRPR…QSNV). Polar residues-rich tracts occupy residues 110 to 158 (TSID…TALP), 190 to 207 (QDSS…SGPQ), and 241 to 257 (FQSG…PSHI). The span at 258 to 270 (QQQQQNVLQPNQL) shows a compositional bias: low complexity. Positions 271–299 (HSSQQPGVPTSATQPSTVNSAPLQGLHTN) are enriched in polar residues. Over residues 300–314 (QQSSPQLSSQQTTQS) the composition is skewed to low complexity. Positions 315 to 328 (MLRQHQSSMLRQHP) are enriched in polar residues. Over residues 329-362 (QSQQASGIHQQQSSLPQQSISPLQQQPTQLMRQQ) the composition is skewed to low complexity. Positions 363–374 (AANSSGIQQKQM) are enriched in polar residues. The span at 401–436 (IQQQQSQQQPLQQPQQQQKQQPPAQQQLMSQQNSLQ) shows a compositional bias: low complexity. Over residues 437–448 (ATHQNPLGTQSN) the composition is skewed to polar residues. Residues 498–525 (SSQGQQSQNQPSQQQMMPQLQSHHQQLG) are compositionally biased toward low complexity. Residues 567-588 (SQRTLPEMPSSSLDSTAQTESA) are compositionally biased toward polar residues. A compositionally biased stretch (low complexity) spans 688 to 712 (PVQQGQLPQSQMQPMQQPQSQTVQD). Polar residues-rich tracts occupy residues 716–728 (DNQT…SMSM), 735–749 (AQQS…NVLS), and 756–815 (APQQ…QSNV). Residues 834–882 (QDQQMQLKQQFQQRQMQQQQLQARQQQQQQQLQARQQAAQLQQMNDMND) are a coiled coil. 2 disordered regions span residues 947–986 (KMGT…SSSL) and 1146–1165 (FAGS…GKKA). Over residues 957–973 (SPFVVPSPSSTPLAPSP) the composition is skewed to low complexity. Polar residues predominate over residues 1148–1160 (GSETSDLESTATS).

This sequence belongs to the plant Mediator complex subunit 15 family. As to quaternary structure, component of the Mediator complex.

It localises to the nucleus. Functionally, component of the Mediator complex, a coactivator involved in the regulated transcription of nearly all RNA polymerase II-dependent genes. Mediator functions as a bridge to convey information from gene-specific regulatory proteins to the basal RNA polymerase II transcription machinery. The Mediator complex, having a compact conformation in its free form, is recruited to promoters by direct interactions with regulatory proteins and serves for the assembly of a functional preinitiation complex with RNA polymerase II and the general transcription factors. The sequence is that of Mediator of RNA polymerase II transcription subunit 15a (MED15A) from Arabidopsis thaliana (Mouse-ear cress).